A 435-amino-acid polypeptide reads, in one-letter code: Nuclear hormone receptor family member nhr-136 (435 aa).

A DNA-binding region (nuclear receptor) is located at residues 50 to 129 (PSNCKVCRHS…AGMNPSAIQA (80 aa)). 2 consecutive NR C4-type zinc fingers follow at residues 53–73 (CKVC…CNGC) and 89–112 (CLKM…CRAC). In terms of domain architecture, NR LBD spans 194–430 (RDIRKLDELI…RYTRISNLYE (237 aa)).

The protein belongs to the nuclear hormone receptor family.

The protein localises to the nucleus. In terms of biological role, orphan nuclear receptor. This Caenorhabditis elegans protein is Nuclear hormone receptor family member nhr-136 (nhr-136).